The following is a 948-amino-acid chain: Valine--tRNA ligase (948 aa).

The 'HIGH' region signature appears at 40–50; it reads PNVTGSLHMGH. The 'KMSKS' region motif lies at 551-555; it reads KMSKS. Lys554 is an ATP binding site. Positions 879–945 form a coiled coil; sequence LIDKGAELAR…GKLAEQHARI (67 aa).

The protein belongs to the class-I aminoacyl-tRNA synthetase family. ValS type 1 subfamily. In terms of assembly, monomer.

It localises to the cytoplasm. The enzyme catalyses tRNA(Val) + L-valine + ATP = L-valyl-tRNA(Val) + AMP + diphosphate. Its function is as follows. Catalyzes the attachment of valine to tRNA(Val). As ValRS can inadvertently accommodate and process structurally similar amino acids such as threonine, to avoid such errors, it has a 'posttransfer' editing activity that hydrolyzes mischarged Thr-tRNA(Val) in a tRNA-dependent manner. This is Valine--tRNA ligase from Pseudomonas syringae pv. syringae (strain B728a).